We begin with the raw amino-acid sequence, 411 residues long: Tyrosine--tRNA ligase (411 aa).

Tyrosine 34 lines the L-tyrosine pocket. The short motif at cysteine 39–serine 48 is the 'HIGH' region element. Residues tyrosine 171 and glutamine 175 each coordinate L-tyrosine. The 'KMSKS' region signature appears at lysine 231–threonine 235. Lysine 234 contacts ATP. The S4 RNA-binding domain occupies isoleucine 345–valine 411.

Belongs to the class-I aminoacyl-tRNA synthetase family. TyrS type 1 subfamily. As to quaternary structure, homodimer.

It localises to the cytoplasm. The enzyme catalyses tRNA(Tyr) + L-tyrosine + ATP = L-tyrosyl-tRNA(Tyr) + AMP + diphosphate + H(+). In terms of biological role, catalyzes the attachment of tyrosine to tRNA(Tyr) in a two-step reaction: tyrosine is first activated by ATP to form Tyr-AMP and then transferred to the acceptor end of tRNA(Tyr). The polypeptide is Tyrosine--tRNA ligase (Rickettsia rickettsii (strain Sheila Smith)).